A 267-amino-acid chain; its full sequence is 3-methyl-2-oxobutanoate hydroxymethyltransferase (267 aa).

Residues Asp-46 and Asp-85 each contribute to the Mg(2+) site. 3-methyl-2-oxobutanoate-binding positions include 46–47 (DS), Asp-85, and Lys-115. Glu-117 contributes to the Mg(2+) binding site. Glu-184 acts as the Proton acceptor in catalysis.

The protein belongs to the PanB family. As to quaternary structure, homodecamer; pentamer of dimers. Requires Mg(2+) as cofactor.

It is found in the cytoplasm. The catalysed reaction is 3-methyl-2-oxobutanoate + (6R)-5,10-methylene-5,6,7,8-tetrahydrofolate + H2O = 2-dehydropantoate + (6S)-5,6,7,8-tetrahydrofolate. It functions in the pathway cofactor biosynthesis; (R)-pantothenate biosynthesis; (R)-pantoate from 3-methyl-2-oxobutanoate: step 1/2. Its function is as follows. Catalyzes the reversible reaction in which hydroxymethyl group from 5,10-methylenetetrahydrofolate is transferred onto alpha-ketoisovalerate to form ketopantoate. The chain is 3-methyl-2-oxobutanoate hydroxymethyltransferase from Geotalea uraniireducens (strain Rf4) (Geobacter uraniireducens).